The following is a 314-amino-acid chain: 4-hydroxy-3-methylbut-2-enyl diphosphate reductase (314 aa).

Position 12 (Cys-12) interacts with [4Fe-4S] cluster. (2E)-4-hydroxy-3-methylbut-2-enyl diphosphate is bound by residues His-41 and His-74. Positions 41 and 74 each coordinate dimethylallyl diphosphate. 2 residues coordinate isopentenyl diphosphate: His-41 and His-74. Residue Cys-96 participates in [4Fe-4S] cluster binding. Position 124 (His-124) interacts with (2E)-4-hydroxy-3-methylbut-2-enyl diphosphate. His-124 provides a ligand contact to dimethylallyl diphosphate. His-124 contributes to the isopentenyl diphosphate binding site. Residue Glu-126 is the Proton donor of the active site. Thr-167 contacts (2E)-4-hydroxy-3-methylbut-2-enyl diphosphate. Cys-197 contacts [4Fe-4S] cluster. 4 residues coordinate (2E)-4-hydroxy-3-methylbut-2-enyl diphosphate: Ser-225, Ser-226, Asn-227, and Ser-269. The dimethylallyl diphosphate site is built by Ser-225, Ser-226, Asn-227, and Ser-269. Residues Ser-225, Ser-226, Asn-227, and Ser-269 each contribute to the isopentenyl diphosphate site.

This sequence belongs to the IspH family. The cofactor is [4Fe-4S] cluster.

It carries out the reaction isopentenyl diphosphate + 2 oxidized [2Fe-2S]-[ferredoxin] + H2O = (2E)-4-hydroxy-3-methylbut-2-enyl diphosphate + 2 reduced [2Fe-2S]-[ferredoxin] + 2 H(+). The enzyme catalyses dimethylallyl diphosphate + 2 oxidized [2Fe-2S]-[ferredoxin] + H2O = (2E)-4-hydroxy-3-methylbut-2-enyl diphosphate + 2 reduced [2Fe-2S]-[ferredoxin] + 2 H(+). It functions in the pathway isoprenoid biosynthesis; dimethylallyl diphosphate biosynthesis; dimethylallyl diphosphate from (2E)-4-hydroxy-3-methylbutenyl diphosphate: step 1/1. It participates in isoprenoid biosynthesis; isopentenyl diphosphate biosynthesis via DXP pathway; isopentenyl diphosphate from 1-deoxy-D-xylulose 5-phosphate: step 6/6. Its function is as follows. Catalyzes the conversion of 1-hydroxy-2-methyl-2-(E)-butenyl 4-diphosphate (HMBPP) into a mixture of isopentenyl diphosphate (IPP) and dimethylallyl diphosphate (DMAPP). Acts in the terminal step of the DOXP/MEP pathway for isoprenoid precursor biosynthesis. This Glaesserella parasuis serovar 5 (strain SH0165) (Haemophilus parasuis) protein is 4-hydroxy-3-methylbut-2-enyl diphosphate reductase.